The primary structure comprises 691 residues: Elongation factor G (691 aa).

The tr-type G domain occupies 8-282; that stretch reads NKTRNIGIMA…AVVEFLPAPV (275 aa). GTP contacts are provided by residues 17 to 24, 81 to 85, and 135 to 138; these read AHIDAGKT, DTPGH, and NKMD.

The protein belongs to the TRAFAC class translation factor GTPase superfamily. Classic translation factor GTPase family. EF-G/EF-2 subfamily.

The protein localises to the cytoplasm. Its function is as follows. Catalyzes the GTP-dependent ribosomal translocation step during translation elongation. During this step, the ribosome changes from the pre-translocational (PRE) to the post-translocational (POST) state as the newly formed A-site-bound peptidyl-tRNA and P-site-bound deacylated tRNA move to the P and E sites, respectively. Catalyzes the coordinated movement of the two tRNA molecules, the mRNA and conformational changes in the ribosome. The protein is Elongation factor G of Heliobacterium modesticaldum (strain ATCC 51547 / Ice1).